The primary structure comprises 495 residues: MDLLANVPSWSDIERSLDQKFSAVNQSIHQGLQSANDSWHGFSRRVSDGAGQAYGYLGGHRIDNVQQALAMSYPIFQEDLKRKWASIGIEQILPVLLQLVKEVSMILGGSIAVGSAAGGAIGALAFGVGAAPGAVAGAGIGLEVGNLILLALGLSAIAEYFIKGLPVCLATLQEGIATAWNAEEGVKPAGLDPTGGSVAVIQERTERAARQLARGQEQLVLLLLMAIVTYLLRGQMKAGIMGSMENIATRSAKLQADIANKQFGAWLAKNEAKLLAHPDLQIKGPTPVKKPEPLQPARQPEKASAPKPVAKPAVMSLREAVGNQTADRWISTGRRIADFTDPKRSALLTDDQIGALHGYTTNEGYQWINPALRGQTPLSPQMEAFVTHANEGLAKLPSYTLGDTFRGTTLPEDVMSRMQVGLPTSDAAFLSTSADRALAFNGNVKMTLQGVTGKDISFLSGHREAEVLFGPGTRFNVVDRVDNGSVTQFILKEIP.

The disordered stretch occupies residues 278–309 (PDLQIKGPTPVKKPEPLQPARQPEKASAPKPV). In terms of domain architecture, TR mART core spans 315-495 (MSLREAVGNQ…VTQFILKEIP (181 aa)). Residues 344-495 (RSALLTDDQI…VTQFILKEIP (152 aa)) are ART domain. Catalysis depends on residues Arg406, Ser431, and Glu466.

It belongs to the Arg-specific ADP-ribosyltransferase family.

Its subcellular location is the secreted. The protein localises to the host cytoplasm. It catalyses the reaction L-arginyl-[protein] + NAD(+) = N(omega)-(ADP-D-ribosyl)-L-arginyl-[protein] + nicotinamide + H(+). Functionally, toxic component of a contact-dependent interbacterial competition system (also called effector-immunity systems). Acts by ADP-ribosylating a number of target proteins in target cells; E.coli target proteins include FtsZ, EFTu, RNase E, Fis, YegQ, GuaB and IF2. This Pseudomonas putida (strain GB-1) protein is NAD(+)--protein-arginine ADP-ribosyltransferase Tre1.